The chain runs to 445 residues: MAGKLGVLLLALVLSLAQPASARRKLLVFLLDGFRADYISDEALESLPGFKEIVSRGVKVDYLTPDFPTLSYPNYYSLMTGRHCEVHQMTGNYMWDPDTNKSFDLGINRDSRLPLWWNGSEPLWVTLTKAKRKVYMYYWPGCEVEILGVRPTYCLEYKSVPTDINFVNAVSGALDVFKSGQADLAAIYYERVDVEGHHYGPSSPQRKDAVKAVDTVMAYMTKWIQERDLQDDLNVIIFSDHGMTDISWTDKVIKLDNYINLRDLQQLKGRGPVVSLWPAPGKHSEIYNKVRRVEHMTVYAKEDIPSRFYYKKGKFVSPLTLVADEGWFITENRESLPFWMNSTVTRKPEGWQWGWHGYDNELRAMRGIFLAFGPDFKSDFRAAPIRVVDIYNLMCKVTGVTPLPNNGSWSRVMCMLKDPASSAPGAPPCACALVTVLLVLLAILA.

The signal sequence occupies residues 1–22 (MAGKLGVLLLALVLSLAQPASA). Substrate is bound by residues aspartate 32, serine 71, and asparagine 92. Residues aspartate 32 and serine 71 each coordinate Zn(2+). The active-site Nucleophile is serine 71. A Phosphoserine modification is found at serine 71. 2 N-linked (GlcNAc...) asparagine glycosylation sites follow: asparagine 100 and asparagine 118. Residues cysteine 142 and cysteine 154 are joined by a disulfide bond. Aspartate 193 provides a ligand contact to substrate. Residues aspartate 193, histidine 197, aspartate 240, and histidine 241 each coordinate Zn(2+). Histidine 241 contacts substrate. N-linked (GlcNAc...) asparagine glycosylation is present at asparagine 341. Histidine 356 contacts substrate. Position 356 (histidine 356) interacts with Zn(2+). N-linked (GlcNAc...) asparagine glycosylation occurs at asparagine 406. Serine 421 is lipidated: GPI-anchor amidated serine. A propeptide spans 422–445 (SAPGAPPCACALVTVLLVLLAILA) (removed in mature form).

This sequence belongs to the nucleotide pyrophosphatase/phosphodiesterase family. In terms of assembly, homodimer; disulfide-linked. Homotetramer. Zn(2+) serves as cofactor.

It localises to the cell membrane. It carries out the reaction sn-glycerol 3-phosphocholine + H2O = phosphocholine + glycerol + H(+). The catalysed reaction is a 1-acyl-sn-glycero-3-phosphocholine + H2O = a 1-acyl-sn-glycerol + phosphocholine + H(+). It catalyses the reaction a 1-O-alkyl-sn-glycero-3-phosphocholine + H2O = a 1-O-alkyl-sn-glycerol + phosphocholine + H(+). The enzyme catalyses 1-dodecanoyl-sn-glycero-3-phosphocholine + H2O = 1-dodecanoyl-sn-glycerol + phosphocholine + H(+). It carries out the reaction 1-hexadecanoyl-sn-glycero-3-phosphocholine + H2O = 1-hexadecanoyl-sn-glycerol + phosphocholine + H(+). The catalysed reaction is 1-(5Z,8Z,11Z,14Z-eicosatetraenoyl)-sn-glycero-3-phosphocholine + H2O = 1-(5Z,8Z,11Z,14Z-eicosatetraenoyl)-sn-glycerol + phosphocholine + H(+). It catalyses the reaction 1-tetradecanoyl-sn-glycero-3-phosphocholine + H2O = 1-tetradecanoyl-sn-glycerol + phosphocholine + H(+). The enzyme catalyses sphing-4-enine-phosphocholine + H2O = sphing-4-enine + phosphocholine + H(+). It carries out the reaction 1-(9Z-octadecenoyl)-sn-glycero-3-phosphocholine + H2O = 1-(9Z-octadecenoyl)-sn-glycerol + phosphocholine + H(+). The catalysed reaction is 1-(9Z,12Z)-octadecadienoyl-sn-glycero-3-phosphocholine + H2O = 1-(9Z,12Z-octadecadienoyl)-sn-glycerol + phosphocholine + H(+). It catalyses the reaction glycero-2-phosphocholine + H2O = phosphocholine + glycerol + H(+). Inhibited by EDTA and EGTA in vitro. Its function is as follows. Choline-specific glycerophosphodiesterase that hydrolyzes glycerophosphocholine (GPC) and lysophosphatidylcholine (LPC) and contributes to supplying choline to the cells. Has a preference for LPC with short (12:0 and 14:0) or polyunsaturated (18:2 and 20:4) fatty acids. In vitro, hydrolyzes only choline-containing lysophospholipids, such as sphingosylphosphorylcholine (SPC), platelet-activating factor (PAF) and lysoPAF, but not other lysophospholipids. This Bos taurus (Bovine) protein is Glycerophosphocholine choline phosphodiesterase ENPP6.